A 228-amino-acid polypeptide reads, in one-letter code: MEEKKQQNVTIKGTKDGITLHLDDCCSFSELLKELDEKLSTHYYDGDGRSLIEVHVKVGNRYLTEVQQEEIRTLIRNKKNLVVDSIESDVITKEEAIAWKEETEIVPISKIVRSGQVLHVKGNLLLIGDVNPGGTVIAGGNIFVVGSLRGIAHAGYYGDSDAVIAASVMNPMQLRISDVAMRAPEEKEDGAEAAECAYINENNHIVVDRLQLLTHLRPNLTKLERGIV.

This sequence belongs to the MinC family. Interacts with MinD and FtsZ.

Its function is as follows. Cell division inhibitor that blocks the formation of polar Z ring septums. Rapidly oscillates between the poles of the cell to destabilize FtsZ filaments that have formed before they mature into polar Z rings. Prevents FtsZ polymerization. The chain is Probable septum site-determining protein MinC from Bacillus anthracis (strain A0248).